A 593-amino-acid chain; its full sequence is Pyruvate kinase isozyme A, chloroplastic (593 aa).

The disordered stretch occupies residues 57–94 (DEPQSSPVLVSENGSGGVLSSATQEYGRNAAPGTDSSS). Position 144 (R144) interacts with substrate. K(+) contacts are provided by N146, D178, and T179. 146 to 149 (NMCH) serves as a coordination point for ATP. E343 is a Mg(2+) binding site. Substrate is bound by residues G366, D367, and S399. Mg(2+) is bound at residue D367.

The protein belongs to the pyruvate kinase family. The cofactor is Mg(2+). Requires K(+) as cofactor. Highest levels in roots. Also found in stems, leaves and flowers.

The protein resides in the plastid. The protein localises to the chloroplast. It carries out the reaction pyruvate + ATP = phosphoenolpyruvate + ADP + H(+). Its pathway is carbohydrate degradation; glycolysis; pyruvate from D-glyceraldehyde 3-phosphate: step 5/5. This chain is Pyruvate kinase isozyme A, chloroplastic, found in Nicotiana tabacum (Common tobacco).